The following is a 105-amino-acid chain: Guanidinium exporter (105 aa).

A topological domain (cytoplasmic) is located at residue Met1. The helical transmembrane segment at 2–19 (SWIVLLIAGLLEVVWAIG) threads the bilayer. At 20 to 28 (LKYTHGFTR) the chain is on the periplasmic side. A helical transmembrane segment spans residues 29–48 (LTPSIITIAAMIVSIAMLSW). Residues 49–54 (AMRTLP) are Cytoplasmic-facing. Residues 55–77 (VGTAYAVWTGIGAVGAAITGILL) form a helical membrane-spanning segment. Over 78 to 86 (LGESASPAR) the chain is Periplasmic. A helical transmembrane segment spans residues 87-104 (LLSLGLIVAGIIGLKLST). His105 is a topological domain (cytoplasmic).

Belongs to the drug/metabolite transporter (DMT) superfamily. Small multidrug resistance (SMR) (TC 2.A.7.1) family. Gdx/SugE subfamily.

The protein resides in the cell inner membrane. Its function is as follows. Guanidinium ion exporter. Couples guanidinium export to the proton motive force, exchanging one guanidinium ion for two protons. The polypeptide is Guanidinium exporter (Citrobacter freundii).